A 257-amino-acid polypeptide reads, in one-letter code: Ribosome-associated protein quality control protein P2 (257 aa).

The N-terminal domain stretch occupies residues 1 to 74; sequence MSDIYQHFRK…RAERKRAILF (74 aa). Residues 87-166 form a central region region; it reads LQAFNVRYAD…EKIDLSDLNI (80 aa). The region spanning 181-251 is the S4 RNA-binding domain; sequence LRLDAVCASM…GKTKKDKWRV (71 aa).

As to quaternary structure, in the presence of chloramphenicol (a translation elongation inhibitor), but not erythromycin or lincomycin, associates with 50S ribosomal subunits with or without a tRNA in the P-site. The S4 domain binds in a similar position to RqcP.

The protein localises to the cytoplasm. Functionally, part of the ribosome quality control system (RQC), a ribosome-associated complex that mediates the extraction of incompletely synthesized nascent chains from stalled ribosomes and their subsequent degradation. RqcH recruits Ala-charged tRNA, and with RqcP directs the elongation of stalled nascent chains on 50S ribosomal subunits, leading to non-templated C-terminal alanine extensions (Ala tail). The Ala tail promotes nascent chain degradation. RqcP2 (YlmH) overexpression can compensate for RqcP's role in Ala tailing during RQC, restoring Ala tail addition to peptides in stalled ribosomes. Overexpression complements a double ssrA-rqcP double deletion, but not an ssrA-rqcH double deletion. In terms of biological role, the majority of tagged protein is associated with tRNA-less 50S subunits, suggesting it might also play a role in late stage 50S subunit biogenesis. This chain is Ribosome-associated protein quality control protein P2, found in Bacillus subtilis (strain 168).